Reading from the N-terminus, the 209-residue chain is tRNA (guanine-N(7)-)-methyltransferase (209 aa).

S-adenosyl-L-methionine contacts are provided by aspartate 35, glutamate 60, asparagine 87, and aspartate 113. The active site involves aspartate 113. Substrate contacts are provided by lysine 117 and aspartate 149.

Belongs to the class I-like SAM-binding methyltransferase superfamily. TrmB family.

The enzyme catalyses guanosine(46) in tRNA + S-adenosyl-L-methionine = N(7)-methylguanosine(46) in tRNA + S-adenosyl-L-homocysteine. It functions in the pathway tRNA modification; N(7)-methylguanine-tRNA biosynthesis. In terms of biological role, catalyzes the formation of N(7)-methylguanine at position 46 (m7G46) in tRNA. In Prochlorococcus marinus (strain MIT 9515), this protein is tRNA (guanine-N(7)-)-methyltransferase.